We begin with the raw amino-acid sequence, 635 residues long: Chaperone protein DnaK (635 aa).

Position 200 is a phosphothreonine; by autocatalysis (Thr-200). A disordered region spans residues 595–635 (KAQPLTEKVQAKSSAENTSKEKSKADDDVVDADFEEVKDDK). A compositionally biased stretch (basic and acidic residues) spans 612–621 (TSKEKSKADD). Acidic residues predominate over residues 622 to 635 (DVVDADFEEVKDDK).

It belongs to the heat shock protein 70 family.

In terms of biological role, acts as a chaperone. The protein is Chaperone protein DnaK of Ruthia magnifica subsp. Calyptogena magnifica.